We begin with the raw amino-acid sequence, 154 residues long: CASP-like protein 5C2 (154 aa).

Residues methionine 1–arginine 17 are Cytoplasmic-facing. The chain crosses the membrane as a helical span at residues phenylalanine 18–tyrosine 38. Topologically, residues aspartate 39 to threonine 41 are extracellular. Residues threonine 42–leucine 62 traverse the membrane as a helical segment. Over threonine 63–serine 81 the chain is Cytoplasmic. The chain crosses the membrane as a helical span at residues isoleucine 82 to alanine 102. Residues serine 103–alanine 128 are Extracellular-facing. The chain crosses the membrane as a helical span at residues alanine 129–leucine 149. Residues proline 150–tyrosine 154 lie on the Cytoplasmic side of the membrane.

It belongs to the Casparian strip membrane proteins (CASP) family. As to quaternary structure, homodimer and heterodimers.

It is found in the cell membrane. This Arabidopsis thaliana (Mouse-ear cress) protein is CASP-like protein 5C2.